The following is a 469-amino-acid chain: MTTPVRTRFAPSPTGFIHLGNIRSALYPWAFARKSKGVFVLRIEDTDVERSTEQSVDAILEGMQWLGLDYDEGPFYQMQRMDRYREVLKHMQEQGLVYPCYMSTEELDALRERQRASGEKPRYDGTWRPEPGKVLPTPPAGVQPVLRFRNPLTGVVAWDDAVKGRVEISNEELDDLVIARPDGTPTYNFCVVVDDLDMKITHVIRGDDHVNNTPRQINILRALGGEPPVYAHLPTVLNEQGEKMSKRHGAMSVMGYRDAGYLPEAVLNYLARLGWSHGDAEIFSREQLIEWFDLEHLGKSPAQYDHNKLNWLNNHYIKEADNARLADLSKPFFAALGIDEPTLAKGADLVSVIALMKDRASTVKEVVDNAAMFYREPNPDADALAQHVTDAVRPALADLAAALKACEWTKEGIAAALKATLGAHKLKMPQLAMPVRVLVAGTTHTPSIDSVLMLFGRDVVVSRIEKAVV.

Residues 11-21 carry the 'HIGH' region motif; the sequence is PSPTGFIHLGN. The segment covering 116–131 has biased composition (basic and acidic residues); it reads ASGEKPRYDGTWRPEP. Residues 116 to 139 are disordered; that stretch reads ASGEKPRYDGTWRPEPGKVLPTPP. The 'KMSKS' region signature appears at 243–247; sequence KMSKR. Position 246 (Lys-246) interacts with ATP.

The protein belongs to the class-I aminoacyl-tRNA synthetase family. Glutamate--tRNA ligase type 1 subfamily. As to quaternary structure, monomer.

It is found in the cytoplasm. It catalyses the reaction tRNA(Glu) + L-glutamate + ATP = L-glutamyl-tRNA(Glu) + AMP + diphosphate. Catalyzes the attachment of glutamate to tRNA(Glu) in a two-step reaction: glutamate is first activated by ATP to form Glu-AMP and then transferred to the acceptor end of tRNA(Glu). This is Glutamate--tRNA ligase from Paraburkholderia phymatum (strain DSM 17167 / CIP 108236 / LMG 21445 / STM815) (Burkholderia phymatum).